The primary structure comprises 671 residues: MERLSQMAGRRAWCAEDSVPRQEEEDRTRPSKTVTFKDVAVDLTQEEWQQMKPAQRALYRDVMLETYSNLVTVGCQVTKPDVIFKLEQAEEPWVLEEEMFWRRSPEAARGRMKSFAFKDMAKDLRFEDVVIYFSLEEWECLRHSHRNLYRAVMLDNYSNLLSLSLADTKPRVVSLLEQGKEPWMVMRNETKIWHPDWVSRTEAKDSSKIKTLQEKMAKKHTCPTLEDSKTRGDREVTRELEGQQVHQEGHLRQAAVTSVERPDSVQCTAHREAHPGGKPCSSEKSQKTSLCQPPPIEREQLHSKAKASEHAQHGKVFNSCTSDTAVHPRPQESRKDSERKKSALAGGPDTSKPQSAQGSERPHKCKECGKAFHTPSQLSHHQKLHVGEKPYKCQECGKAFPSNAQLSLHHRVHTDEKCFECKECGKAFMRPSHLLRHQRIHTGEKPHKCKECGKAFRYDTQLSLHLLTHAGARRFECKDCDKVYSCASQLALHQMSHTGEKPHKCKECGKGFISDSHLLRHQSVHTGETPYKCKECGKGFRRGSELARHQRAHSGDKPYKCKECGKSFTCTTELFRHQKVHTGDRPHKCKECGKAFIRRSELTHHERSHSGEKPYECKECGKTFGRGSELSRHQKIHTGEKPYKCQQCGKAFIRGSHLTQHQRIHTGRRSE.

Positions 1-31 (MERLSQMAGRRAWCAEDSVPRQEEEDRTRPS) are disordered. Over residues 18–29 (SVPRQEEEDRTR) the composition is skewed to basic and acidic residues. KRAB domains follow at residues 34-105 (VTFK…RRSP) and 124-195 (LRFE…IWHP). Positions 214–366 (EKMAKKHTCP…QGSERPHKCK (153 aa)) are disordered. 3 stretches are compositionally biased toward basic and acidic residues: residues 226 to 251 (EDSK…EGHL), 296 to 312 (IERE…EHAQ), and 329 to 341 (RPQE…ERKK). 11 consecutive C2H2-type zinc fingers follow at residues 363–385 (HKCK…QKLH), 391–413 (YKCQ…HRVH), 419–441 (FECK…QRIH), 447–469 (HKCK…LLTH), 475–497 (FECK…QMSH), 503–525 (HKCK…QSVH), 531–553 (YKCK…QRAH), 559–581 (YKCK…QKVH), 587–609 (HKCK…ERSH), 615–637 (YECK…QKIH), and 643–665 (YKCQ…QRIH).

This sequence belongs to the krueppel C2H2-type zinc-finger protein family. In terms of assembly, interacts with TRIM28. Little or no expression detected in most adult tissues (brain, liver, kidney, spleen, testis, ovary). In the hippocampus, detected in neural stem cells within the subventricular zone and subgranular zone.

Its subcellular location is the nucleus. Its function is as follows. Has transcriptional repression activity, partially through the recruitment of the corepressor TRIM28 but also has repression activity independently of this interaction. Essential during embryonic development, where it acts as direct repressor of IGF2-P0, placental-specific transcript of IGF2, in early development and regulates convergent extension movements required for axis elongation and tissue morphogenesis in all germ layers. Also important for normal morphogenesis of extraembryonic tissues including the yolk sac, extraembryonic mesoderm and placenta. May enhance proliferation or maintenance of neural stem cells. The sequence is that of Zinc finger protein 568 from Mus musculus (Mouse).